We begin with the raw amino-acid sequence, 415 residues long: BTB/POZ and MATH domain-containing protein 6 (415 aa).

Positions 1–33 are disordered; sequence MSKLMTRTSGSSSPNTIPDQIESPTSSRSVTQT. Residues 35–169 form the MATH domain; the sequence is NGSHQFVIQG…DDCLKINCTV (135 aa). The region spanning 205-271 is the BTB domain; it reads SDVTFDVAGE…MYKDSLPGDV (67 aa). The tract at residues 385-415 is disordered; it reads SSSGGGKSQSVWAQLSNGGETSSRRVRQRTT. Over residues 392–405 the composition is skewed to polar residues; that stretch reads SQSVWAQLSNGGET.

The protein belongs to the Tdpoz family. In terms of assembly, heterodimer with BPM1. Interacts with RAP2-4. Interacts with CUL3A. Binds to MYB56 at the promoter of FLOWERING LOCUS T (FT). Ubiquitous.

It is found in the nucleus. It localises to the cytoplasm. It functions in the pathway protein modification; protein ubiquitination. May act as a substrate-specific adapter of an E3 ubiquitin-protein ligase complex (CUL3-RBX1-BTB) which mediates the ubiquitination and subsequent proteasomal degradation of target proteins. The protein is BTB/POZ and MATH domain-containing protein 6 (BPM6) of Arabidopsis thaliana (Mouse-ear cress).